Here is a 686-residue protein sequence, read N- to C-terminus: MSKNNTMTSAVSDMLSQQQLNLQHLHNLQQHTRSMTSADHANVLQQQQQQQQQQQQQQQQQQQSASFQNGSLTSDINQQSYLNGQPVPSTSNSTFQNNRTLTMNSGGLQGIISNGSPNIDSNTNVTIAVPDPNNNNGKQLQGKNSLTNTSILSRARSSLQRQRLAQQQQQQQDPRSPLVILVPTAAQPTDILAARFSAWRNVIKSVIVYLTEIASIQDEIVRQQLRLSHAVQFPFFSIENQYQPSSQEDKSVQKFFLPLGNGSIQDLPTILNQYHESLASSASKASRELTNDVIPRLEDLRRDLIVKIKEIKSLQSDFKNSCSKELQQTKQAMKQFQESLKDARYSVPKQDPFLTKLALDRQIKKQLQEENFLHEAFDNLETSGAELEKIVVMEIQNSLTIYARLLGQEAQLVFDILISKLDSGFFNVDPQFEWDNFISRDPNFLLPNLPMRTFKEIVYKYQFDPLTYEIKSGFLERRSKFLKSYSKGYYVLTPNFLHEFKTADRKKDLVPVMSLALSECTVTEHSRKNSTSSPNSTGSDAKFVLHAKQNGIIRRGHNWVFKADSYESMMSWFDNLKILTSTSNIQDKYKFITQKLNLNSDGKPKLTNNHTSINKYQLSNANSTMVENDENDDINSNYVGSTVTPKLDNQTNTNTSMSSLPDTNDSELQDQVPNIYIQTPINDFKS.

The disordered stretch occupies residues 33-147 (RSMTSADHAN…KQLQGKNSLT (115 aa)). A compositionally biased stretch (low complexity) spans 45–63 (QQQQQQQQQQQQQQQQQQQ). Residues 64–126 (SASFQNGSLT…PNIDSNTNVT (63 aa)) show a composition bias toward polar residues. Low complexity predominate over residues 133-144 (NNNNGKQLQGKN). Phosphoserine is present on residues S145, S150, and S153. Positions 157-172 (SSLQRQRLAQQQQQQQ) are enriched in low complexity. A disordered region spans residues 157–176 (SSLQRQRLAQQQQQQQDPRS). A coiled-coil region spans residues 296 to 381 (RLEDLRRDLI…FLHEAFDNLE (86 aa)). Residues 468–581 (YEIKSGFLER…WFDNLKILTS (114 aa)) form the PH domain. Residues 626–669 (VENDENDDINSNYVGSTVTPKLDNQTNTNTSMSSLPDTNDSELQ) are disordered. Residues 634-663 (INSNYVGSTVTPKLDNQTNTNTSMSSLPDT) are compositionally biased toward polar residues. The PXIXIT-like, required for interaction with CNA1 and CNA2, and calcineurin-dependent dephosphorylation signature appears at 673-678 (PNIYIQ).

Heterodimer of SLM1-SLM2. Binds phosphatidylinositol 4,5-bisphosphate, which is required for function. Interacts with the TORC2 subunits AVO2, BIT61 and TOR2. Interacts with the calcineurin catalytic subunits CNA1 and CNA2. Post-translationally, phosphorylated by the target of rapamycin complex 2 (TORC2) and dephosphorylated by serine/threonine-protein phosphatase 2B (calcineurin). Dephosphorylated in response to the disruption or inhibition of sphingolipid synthesis.

It is found in the cell membrane. Its function is as follows. Together with SLM2, acts as an effector of the TORC2- and calcineurin-signaling pathways. Phosphorylated and activated by TORC2 under favorable growth conditions. Mediates actin polarization via inhibition of calcineurin-dependent transcription. Upon nutrient limitation or environmental stress, gets dephosphorylated by calcineurin. Dephosphorylation inhibits its interaction with TORC2, thereby antagonizing TORC2 signaling and mediating calcineurin-dependent actin depolarization. May play a role in the response to the disruption of sphingolipid synthesis, where dephosphorylation of SLM1 leads to the activation and phosphorylation of YPK1 through the TORC2 and PKH1 pathways, which in turn phosphorylates ORM1 and LAG1 to activate sphingolipid synthesis. Also functions in heat-induced, calcineurin-mediated uracil permease (FUR4) endocytosis. The polypeptide is Phosphatidylinositol 4,5-bisphosphate-binding protein SLM1 (SLM1) (Saccharomyces cerevisiae (strain ATCC 204508 / S288c) (Baker's yeast)).